We begin with the raw amino-acid sequence, 334 residues long: Phosphate acyltransferase (334 aa).

The protein belongs to the PlsX family. As to quaternary structure, homodimer. Probably interacts with PlsY.

It localises to the cytoplasm. It carries out the reaction a fatty acyl-[ACP] + phosphate = an acyl phosphate + holo-[ACP]. Its pathway is lipid metabolism; phospholipid metabolism. Catalyzes the reversible formation of acyl-phosphate (acyl-PO(4)) from acyl-[acyl-carrier-protein] (acyl-ACP). This enzyme utilizes acyl-ACP as fatty acyl donor, but not acyl-CoA. In Mycoplasmopsis agalactiae (strain NCTC 10123 / CIP 59.7 / PG2) (Mycoplasma agalactiae), this protein is Phosphate acyltransferase.